We begin with the raw amino-acid sequence, 198 residues long: UPF0215 protein NEQ431 (198 aa).

A disordered region spans residues 179–198 (TKGDSSKPRAGGDSNPGPAG).

This sequence belongs to the UPF0215 family.

This Nanoarchaeum equitans (strain Kin4-M) protein is UPF0215 protein NEQ431.